A 505-amino-acid chain; its full sequence is One cut domain family member 2 (505 aa).

3 disordered regions span residues 29-94 (LGTL…GTAA), 165-190 (KFHH…RLSG), and 275-333 (EQHL…QLEE). Over residues 35–56 (PVGGGSGGGGGGGGGGGGGGPG) the composition is skewed to gly residues. The segment covering 167–187 (HHPHPHHHPHHHHHHHHHHQR) has biased composition (basic residues). The segment at residues 325–411 (VATSGQLEEI…QRMSALRLAA (87 aa)) is a DNA-binding region (CUT). Residues 427–486 (QKKSRLVFTDLQRRTLFAIFKENKRPSKEMQITISQQLGLELTTVSNFFMNARRRSLEKW) constitute a DNA-binding region (homeobox).

Belongs to the CUT homeobox family.

It is found in the nucleus. In terms of biological role, transcriptional activator. Activates the transcription of a number of liver genes such as HNF3B. The protein is One cut domain family member 2 (Onecut2) of Mus musculus (Mouse).